We begin with the raw amino-acid sequence, 833 residues long: MRLENKDIRLASAVLEVELHQTSALSVPTCPDPGRLLTVKPATSNYKLGQADPCIPYAGEAAGKSVCVPEHTEFGSFLVKGSSSLKDLSFKEDTPLLWNSSQKKRSQLMPVHHPEFIATEGSWENGLTAWEQKCMLGKEVADLSALASSEKRDLAGSVHLRAQVSKLGCCVRWIKITGLFVFVVLCSILFSLYPDQGKFWQLLAVSPLENYSVNLSGHADSMILQLDLAGALMAGGPSGSGKEEHVVVVVTQTDAAGNRRRRPQQLTYNWTVLLNPRSEHVVVSRTFEIVSREAVSISIQASLQQTRLVPLLLAHQFLGASVEAQVASAVAILAGVYTLIIFEIVHRTLAAMLGALAALAALAVVGDRPSLTHVVEWIDFETLALLFGMMILVAVFSETGFFDYCAVKAYQLSRGRVWAMIFMLCLMAAILSAFLDNVTTMLLFTPVTIRLCEVLNLDPRQVLIAEVIFTNIGGAATAIGDPPNVIIVSNQELRKMGLDFAGFTAHMFLGICLVLLVSFPLLRLLYWNKKLYNKEPSEIVELKHEIHVWRLTAQRISPASREETAVRGLLLEKVLALEHLLAQRLHTFHRQISQEDKNWETNIQELQRKHRISDRSLLVKCLTVLGFVISMFFLNSFVPGIHLDLGWIAILGAIWLLILADIHDFEIILHRVEWATLLFFAALFVLMEALTHLHLVEYVGEQTALLIKMVPEDQRFAAAIVLIVWVSALASSLIDNIPFTATMIPVLLNLSQDPEISLPALPLMYALALGACLGGNGTLIGASTNVVCAGIAEKHGYGFSFMEFFRLGFPVMLMSCTIGMCYLLIAHIVVGWN.

The Cytoplasmic segment spans residues 1–172 (MRLENKDIRL…QVSKLGCCVR (172 aa)). The chain crosses the membrane as a helical span at residues 173 to 193 (WIKITGLFVFVVLCSILFSLY). Topologically, residues 194-325 (PDQGKFWQLL…QFLGASVEAQ (132 aa)) are extracellular. Residues N210, N214, and N269 are each glycosylated (N-linked (GlcNAc...) asparagine). A helical transmembrane segment spans residues 326-346 (VASAVAILAGVYTLIIFEIVH). At 347–348 (RT) the chain is on the cytoplasmic side. The chain crosses the membrane as a helical span at residues 349 to 369 (LAAMLGALAALAALAVVGDRP). Residues 370–381 (SLTHVVEWIDFE) are Extracellular-facing. A helical membrane pass occupies residues 382-402 (TLALLFGMMILVAVFSETGFF). Residues 403-417 (DYCAVKAYQLSRGRV) are Cytoplasmic-facing. A helical transmembrane segment spans residues 418–438 (WAMIFMLCLMAAILSAFLDNV). Over 439–501 (TTMLLFTPVT…ELRKMGLDFA (63 aa)) the chain is Extracellular. Residues 502–522 (GFTAHMFLGICLVLLVSFPLL) traverse the membrane as a helical segment. The Cytoplasmic segment spans residues 523–617 (RLLYWNKKLY…RKHRISDRSL (95 aa)). Residues 618-638 (LVKCLTVLGFVISMFFLNSFV) traverse the membrane as a helical segment. A topological domain (extracellular) is located at residue P639. Residues 640 to 660 (GIHLDLGWIAILGAIWLLILA) form a helical membrane-spanning segment. The Cytoplasmic segment spans residues 661–675 (DIHDFEIILHRVEWA). The helical transmembrane segment at 676–696 (TLLFFAALFVLMEALTHLHLV) threads the bilayer. The Extracellular portion of the chain corresponds to 697–718 (EYVGEQTALLIKMVPEDQRFAA). The chain crosses the membrane as a helical span at residues 719–739 (AIVLIVWVSALASSLIDNIPF). Residues 740–759 (TATMIPVLLNLSQDPEISLP) are Cytoplasmic-facing. The helical transmembrane segment at 760 to 780 (ALPLMYALALGACLGGNGTLI) threads the bilayer. Topologically, residues 781 to 810 (GASTNVVCAGIAEKHGYGFSFMEFFRLGFP) are extracellular. A helical transmembrane segment spans residues 811 to 831 (VMLMSCTIGMCYLLIAHIVVG). Over 832–833 (WN) the chain is Cytoplasmic.

It belongs to the CitM (TC 2.A.11) transporter family. Most abundant in melanocytes. Also present in neonatal and adult eye tissue presumably as a result of expression in the retinal pigmented epithelium and choroid body, known sites of melanogenesis in the eye. Small but detectable amounts also observed in fetal, neonatal and adult brain. Moderate amounts detected in adult testis and ovary. Not detected in heart, kidney, spleen, liver or thymus.

The protein localises to the melanosome membrane. The catalysed reaction is chloride(in) = chloride(out). Contributes to a melanosome-specific anion (chloride) current that modulates melanosomal pH for optimal tyrosinase activity required for melanogenesis and the melanosome maturation. One of the components of the mammalian pigmentary system. May serve as a key control point at which color variation is determined. Major determinant of eye color. Seems to regulate the post-translational processing of tyrosinase, which catalyzes the limiting reaction in melanin synthesis. The chain is P protein (Oca2) from Mus musculus (Mouse).